We begin with the raw amino-acid sequence, 1851 residues long: Chitin synthase (1851 aa).

The disordered stretch occupies residues 1–21 (MQYHQHQHQFPGPGPSHTSVY). Topologically, residues 1-108 (MQYHQHQHQF…KDTLYNGFLQ (108 aa)) are cytoplasmic. Residues 109 to 129 (VLKMITFVALFVTTLGSSILA) traverse the membrane as a helical segment. Residues 130 to 168 (KLSLLVMAAGLGQAGHNISICPDKIPESPKNSVLISPKN) lie on the Extracellular side of the membrane. Residue asparagine 146 is glycosylated (N-linked (GlcNAc...) asparagine). A helical transmembrane segment spans residues 169–189 (AAKWAWALLLAICIPELLCFA). Over 190 to 208 (RSLHRSLFRKVRGPSFLQF) the chain is Cytoplasmic. The helical transmembrane segment at 209-229 (LLVFTVESVHAFGLGALVFAI) threads the bilayer. Residues 230–234 (MPRGM) lie on the Extracellular side of the membrane. The chain crosses the membrane as a helical span at residues 235–255 (VITMLQLGNSLCLIPSLLLPL). The Cytoplasmic portion of the chain corresponds to 256–261 (SRSRSR). The chain crosses the membrane as a helical span at residues 262-282 (WLPLLLLLDGSAILAQSSAAI). The Extracellular segment spans residues 283 to 291 (WRGSIPLER). Residues 292-312 (FGFVFLCTSLISIAWWQNFVH) form a helical membrane-spanning segment. At 313–337 (PHSFLPATRFFAHYAAKLRECRSKT) the chain is on the cytoplasmic side. A helical transmembrane segment spans residues 338–358 (FVVLSPWKCLIFTFCMFQFVP). Topologically, residues 359–544 (PQIPFRELLQ…ELNQFTTAND (186 aa)) are extracellular. N-linked (GlcNAc...) asparagine glycans are attached at residues asparagine 385 and asparagine 435. The segment at 432-522 (LFRNGTRRPP…DADEQEEEEE (91 aa)) is disordered. The segment covering 442-454 (KKEEVKKNKMDSK) has biased composition (basic and acidic residues). The span at 455–465 (KKTKKLKKKKG) shows a compositional bias: basic residues. Over residues 466 to 478 (GNNNATSTNSSEK) the composition is skewed to low complexity. N-linked (GlcNAc...) asparagine glycosylation is found at asparagine 469 and asparagine 474. The span at 513 to 522 (DADEQEEEEE) shows a compositional bias: acidic residues. The chain crosses the membrane as a helical span at residues 545–565 (ALWLVFVQAGSVLLCQLCAKF). Residues 566 to 573 (ACKVVMQR) are Cytoplasmic-facing. A helical transmembrane segment spans residues 574–594 (VGLALPVVLSIPFGILFLAYS). At 595 to 631 (CRQKATNPCHLSEWMSKELFWQCPTRPFHWQRFFREQ) the chain is on the extracellular side. The chain crosses the membrane as a helical span at residues 632 to 652 (PNLLWLCWWLSQCWITIHLWL). Residues 653-1124 (PRQERLAKSE…VSIWYIAYQL (472 aa)) lie on the Cytoplasmic side of the membrane. The interval 693–718 (SEDIDTEEEANEGGGEQEDGNSSTHT) is disordered. Residues 696–711 (IDTEEEANEGGGEQED) show a composition bias toward acidic residues. Residues 1125–1145 (VMLFSSVLGPGTIFLMIVGAI) traverse the membrane as a helical segment. Residues 1146–1154 (SISFNIDTR) are Extracellular-facing. The chain crosses the membrane as a helical span at residues 1155 to 1175 (LALLIVTTPVLCFCVCCLTCG). Residues 1176-1179 (TETQ) are Cytoplasmic-facing. Residues 1180-1200 (LLLAQVIGALFAMLMTAVIVG) traverse the membrane as a helical segment. Over 1201–1209 (TSLQIQKDG) the chain is Extracellular. The helical transmembrane segment at 1210–1230 (LLSPHSIFLFTVLGSWSFSAL) threads the bilayer. Residues 1231-1235 (LHPLE) lie on the Cytoplasmic side of the membrane. Residues 1236–1256 (FGCLLPCGLYFLAIPCMYMLL) traverse the membrane as a helical segment. Residues 1257 to 1461 (PVYSLCNLNT…QRGLNELRNT (205 aa)) are Extracellular-facing. N-linked (GlcNAc...) asparagine glycosylation occurs at asparagine 1274. Residues 1329 to 1383 (CADETVEVRKLDENFRKIERKLQSLERRTNGQGNNAEEEGKEEEETGKSEQERKE) adopt a coiled-coil conformation. Positions 1350–1402 (LQSLERRTNGQGNNAEEEGKEEEETGKSEQERKEGREEGKEEEGKMSKRKKEE) are disordered. Acidic residues predominate over residues 1364–1373 (AEEEGKEEEE). Over residues 1374 to 1402 (TGKSEQERKEGREEGKEEEGKMSKRKKEE) the composition is skewed to basic and acidic residues. A helical transmembrane segment spans residues 1462–1482 (CCSAFFMVNIVFIIVVLVLQL). At 1483–1527 (QKDCLHIEWPLGPLVNQTRVQCGGGGGRDFEGEEWIMSRLQLEPM) the chain is on the cytoplasmic side. A helical transmembrane segment spans residues 1528-1548 (GFVFIVFFLIILFIQFLAMLF). Topologically, residues 1549-1851 (HRFGTFTHII…FLGTTNKRAK (303 aa)) are extracellular. The interval 1626–1658 (GKRQQNAQIPPRCEKGGNERGEESPTSLPAPPV) is disordered. Basic and acidic residues predominate over residues 1637–1648 (RCEKGGNERGEE). N-linked (GlcNAc...) asparagine glycosylation is present at asparagine 1660. Positions 1765-1851 (HSIFPSSSES…FLGTTNKRAK (87 aa)) are disordered. Positions 1781 to 1822 (GGGRGRGREQERDKCLEGKKEKFRQRVEEGPARCHRLEELFG) are enriched in basic and acidic residues. The span at 1823-1834 (KSRKGGPQKRGK) shows a compositional bias: basic residues.

The protein belongs to the chitin synthase family. Class IV subfamily. May require proteolytic cleavage for activation.

The protein resides in the cell membrane. The enzyme catalyses [(1-&gt;4)-N-acetyl-beta-D-glucosaminyl](n) + UDP-N-acetyl-alpha-D-glucosamine = [(1-&gt;4)-N-acetyl-beta-D-glucosaminyl](n+1) + UDP + H(+). Its function is as follows. Required for the synthesis of chitin. The polypeptide is Chitin synthase (Meloidogyne artiellia (British root-knot nematode)).